The sequence spans 382 residues: Neuropeptide Y receptor type 2 (382 aa).

The segment at 1–39 (MGPIGAEADENQTVEEMKMEPSGPGHTTPRGELAPDSEP) is disordered. Residues 1–46 (MGPIGAEADENQTVEEMKMEPSGPGHTTPRGELAPDSEPELKDSTK) lie on the Extracellular side of the membrane. Asn-11 carries an N-linked (GlcNAc...) asparagine glycan. A helical transmembrane segment spans residues 47–67 (LIEVQIILILAYCSIILLGVV). At 68 to 87 (GNSLVIHVVIKFKSMRTVTN) the chain is on the cytoplasmic side. A helical transmembrane segment spans residues 88–108 (FFIANLAVADLLVNTLCLPFT). Over 109-125 (LTYTLMGEWKMGPVLCH) the chain is Extracellular. A disulfide bridge links Cys-124 with Cys-204. Residues 126-146 (LVPYAQGLAVQVSTITLTVIA) traverse the membrane as a helical segment. Residues 147-166 (LDRHRCIVYHLESKISKRIS) are Cytoplasmic-facing. Residues 167-187 (FLIIGLAWGISALLASPLAIF) traverse the membrane as a helical segment. Residues 188–217 (REYSLIEIIPDFEIVACTEKWPGEEKSIYG) are Extracellular-facing. The helical transmembrane segment at 218-238 (TVYSLSSLLILYVLPLGIISF) threads the bilayer. Residues 239-269 (SYARIWSKLKNHVSPGGVNDHYHQRRQKTTK) are Cytoplasmic-facing. The chain crosses the membrane as a helical span at residues 270 to 290 (MLVCVVVVFAVSWLPLHAFQL). Over 291–305 (AVDIDSQVLDLKEYK) the chain is Extracellular. A helical membrane pass occupies residues 306 to 326 (LIFTVFHIIAMCSTFANPLLY). Topologically, residues 327–382 (GWMNSNYRKAFLSAFRCEQRLDAIHSEVSMTSKAKKNLEATKNGGPDDSFTEATNV) are cytoplasmic. Cys-343 carries the S-palmitoyl cysteine lipid modification. The interval 363–382 (NLEATKNGGPDDSFTEATNV) is disordered.

Belongs to the G-protein coupled receptor 1 family.

The protein resides in the cell membrane. Receptor for neuropeptide Y and peptide YY. This Sus scrofa (Pig) protein is Neuropeptide Y receptor type 2 (NPY2R).